Reading from the N-terminus, the 133-residue chain is MTSRRGRAVGFIRDFQAFILKGNVVELAVAVIIGGAFNKIVSSFVGDLVMPLVNPLIPGGDWRTAVIGPGLKIGSFAGSVIDFLIIAFVLYLAIRAIERFKRKEEAVVAAAEPDVQQQMLATLERIADNLEAR.

Transmembrane regions (helical) follow at residues 17–37 (AFILKGNVVELAVAVIIGGAF) and 73–93 (IGSFAGSVIDFLIIAFVLYLA).

Belongs to the MscL family. Homopentamer.

It localises to the cell inner membrane. In terms of biological role, channel that opens in response to stretch forces in the membrane lipid bilayer. May participate in the regulation of osmotic pressure changes within the cell. The sequence is that of Large-conductance mechanosensitive channel from Synechococcus elongatus (strain ATCC 33912 / PCC 7942 / FACHB-805) (Anacystis nidulans R2).